A 400-amino-acid polypeptide reads, in one-letter code: NAD-dependent protein deacetylase sirtuin-7 (400 aa).

The disordered stretch occupies residues 1–27 (MAAGGLSRSERKAAERVRRLREEQQRE). Positions 8–27 (RSERKAAERVRRLREEQQRE) are enriched in basic and acidic residues. One can recognise a Deacetylase sirtuin-type domain in the interval 82 to 329 (PEELRGKVRE…RLLMAELGLE (248 aa)). NAD(+)-binding positions include 107-126 (GAGI…NGVW) and 167-170 (QNCD). The Proton acceptor role is filled by H187. Positions 195, 198, 225, and 228 each coordinate Zn(2+). NAD(+)-binding positions include 268–270 (GSS), 297–299 (NLQ), and C315. Residues 354–380 (SHSRKSLCRSREEAPPGDRGAPLSSAP) are disordered. At R388 the chain carries Asymmetric dimethylarginine; alternate. Omega-N-methylarginine; alternate is present on R388.

The protein belongs to the sirtuin family. Class IV subfamily. Interacts with UBTF and the RNA polymerase I complex. Interacts with components of the B-WICH complex, such as MYBBP1A, SMARCA5/SNF2H and BAZ1B/WSTF. Interacts with ELK4, leading to stabilization at target promoters for H3K18Ac deacetylation. Interacts with histone H2A and/or histone H2B. Interacts with DNMT1. Interacts with SIRT1. The cofactor is Zn(2+). Post-translationally, phosphorylated during mitosis. In terms of processing, methylation at Arg-388 by PRMT6 inhibits the H3K18Ac histone deacetylase activity, promoting mitochondria biogenesis and maintaining mitochondria respiration. Ubiquitinated via 'Lys-63'-linked ubiquitin chains. Deubiquitinated by USP7, inhibiting the H3K18Ac histone deacetylase activity and regulating gluconeogenesis. Ubiquitinated by E3 ubiquitin-protein ligase complex containing FBXO7; leading to proteasomal degradation.

The protein localises to the nucleus. It localises to the nucleolus. The protein resides in the nucleoplasm. Its subcellular location is the chromosome. It is found in the cytoplasm. It carries out the reaction N(6)-acetyl-L-lysyl-[protein] + NAD(+) + H2O = 2''-O-acetyl-ADP-D-ribose + nicotinamide + L-lysyl-[protein]. The enzyme catalyses N(6)-glutaryl-L-lysyl-[protein] + NAD(+) + H2O = 2''-O-glutaryl-ADP-D-ribose + nicotinamide + L-lysyl-[protein]. It catalyses the reaction N(6)-succinyl-L-lysyl-[protein] + NAD(+) + H2O = 2''-O-succinyl-ADP-D-ribose + nicotinamide + L-lysyl-[protein]. The catalysed reaction is N(6)-propanoyl-L-lysyl-[protein] + NAD(+) + H2O = 3''-O-propanoyl-ADP-D-ribose + nicotinamide + L-lysyl-[protein]. It carries out the reaction N(6)-decanoyl-L-lysyl-[protein] + NAD(+) + H2O = 2''-O-decanoyl-ADP-D-ribose + nicotinamide + L-lysyl-[protein]. With respect to regulation, NAD-dependent protein-lysine deacetylase and deacylase activities are activated by nucleic acids. Histone deacetylase activity is activated by DNA and nucleosomes. Protein-lysine deacylase activity is activated by RNA. H3K18Ac histone deacetylase activity is inhibited by methylation at Arg-388. H3K18Ac histone deacetylase activity is inhibited by deubiquitination by USP7. Its function is as follows. NAD-dependent protein-lysine deacylase that can act both as a deacetylase or deacylase (desuccinylase, depropionylase, deglutarylase and dedecanoylase), depending on the context. Specifically mediates deacetylation of histone H3 at 'Lys-18' (H3K18Ac). In contrast to other histone deacetylases, displays strong preference for a specific histone mark, H3K18Ac, directly linked to control of gene expression. H3K18Ac is mainly present around the transcription start site of genes and has been linked to activation of nuclear hormone receptors; SIRT7 thereby acts as a transcription repressor. Moreover, H3K18 hypoacetylation has been reported as a marker of malignancy in various cancers and seems to maintain the transformed phenotype of cancer cells. Also able to mediate deacetylation of histone H3 at 'Lys-36' (H3K36Ac) in the context of nucleosomes. Also mediates deacetylation of non-histone proteins, such as ATM, CDK9, DDX21, DDB1, FBL, FKBP5/FKBP51, GABPB1, RAN, RRP9/U3-55K and POLR1E/PAF53. Enriched in nucleolus where it stimulates transcription activity of the RNA polymerase I complex. Acts by mediating the deacetylation of the RNA polymerase I subunit POLR1E/PAF53, thereby promoting the association of RNA polymerase I with the rDNA promoter region and coding region. In response to metabolic stress, SIRT7 is released from nucleoli leading to hyperacetylation of POLR1E/PAF53 and decreased RNA polymerase I transcription. Required to restore the transcription of ribosomal RNA (rRNA) at the exit from mitosis. Promotes pre-ribosomal RNA (pre-rRNA) cleavage at the 5'-terminal processing site by mediating deacetylation of RRP9/U3-55K, a core subunit of the U3 snoRNP complex. Mediates 'Lys-37' deacetylation of Ran, thereby regulating the nuclear export of NF-kappa-B subunit RELA/p65. Acts as a regulator of DNA damage repair by mediating deacetylation of ATM during the late stages of DNA damage response, promoting ATM dephosphorylation and deactivation. Suppresses the activity of the DCX (DDB1-CUL4-X-box) E3 ubiquitin-protein ligase complexes by mediating deacetylation of DDB1, which prevents the interaction between DDB1 and CUL4 (CUL4A or CUL4B). Activates RNA polymerase II transcription by mediating deacetylation of CDK9, thereby promoting 'Ser-2' phosphorylation of the C-terminal domain (CTD) of RNA polymerase II. Deacetylates FBL, promoting histone-glutamine methyltransferase activity of FBL. Acts as a regulator of mitochondrial function by catalyzing deacetylation of GABPB1. Regulates Akt/AKT1 activity by mediating deacetylation of FKBP5/FKBP51. Required to prevent R-loop-associated DNA damage and transcription-associated genomic instability by mediating deacetylation and subsequent activation of DDX21, thereby overcoming R-loop-mediated stalling of RNA polymerases. In addition to protein deacetylase activity, also acts as a protein-lysine deacylase. Acts as a protein depropionylase by mediating depropionylation of Osterix (SP7), thereby regulating bone formation by osteoblasts. Acts as a histone deglutarylase by mediating deglutarylation of histone H4 on 'Lys-91' (H4K91glu); a mark that destabilizes nucleosomes by promoting dissociation of the H2A-H2B dimers from nucleosomes. Acts as a histone desuccinylase: in response to DNA damage, recruited to DNA double-strand breaks (DSBs) and catalyzes desuccinylation of histone H3 on 'Lys-122' (H3K122succ), thereby promoting chromatin condensation and DSB repair. Also promotes DSB repair by promoting H3K18Ac deacetylation, regulating non-homologous end joining (NHEJ). Along with its role in DNA repair, required for chromosome synapsis during prophase I of female meiosis by catalyzing H3K18Ac deacetylation. Involved in transcriptional repression of LINE-1 retrotransposon via H3K18Ac deacetylation, and promotes their association with the nuclear lamina. Required to stabilize ribosomal DNA (rDNA) heterochromatin and prevent cellular senescence induced by rDNA instability. Acts as a negative regulator of SIRT1 by preventing autodeacetylation of SIRT1, restricting SIRT1 deacetylase activity. The protein is NAD-dependent protein deacetylase sirtuin-7 of Homo sapiens (Human).